The primary structure comprises 468 residues: Procollagen C-endopeptidase enhancer 1 (468 aa).

The first 24 residues, 1–24, serve as a signal peptide directing secretion; it reads MLPAALTSLLGPFLLAWVLPLARG. Asn28 carries N-linked (GlcNAc...) asparagine glycosylation. 4 disulfide bridges follow: Cys36/Cys62, Cys89/Cys111, Cys158/Cys185, and Cys212/Cys235. CUB domains lie at 36 to 148 and 158 to 272; these read CGGD…YSGR and CGGR…YRTL. Position 41 is a phosphothreonine (Thr41). Ser49 is subject to Phosphoserine. A disordered region spans residues 271–341; it reads TLPRDAVEKE…VAPDAPSITC (71 aa). Residues 272-281 show a composition bias toward basic and acidic residues; sequence LPRDAVEKES. Intrachain disulfides connect Cys341–Cys409 and Cys356–Cys460. Residues 341 to 460 form the NTR domain; that stretch reads CPKQYKRSGT…ILSNLSKRKC (120 aa). Residue Asn454 is glycosylated (N-linked (GlcNAc...) asparagine).

Interacts with EFEMP2. As to expression, expressed at highest levels in collagen-rich tissues, especially tendon. Also expressed in cornea and sterna.

The protein resides in the secreted. Its function is as follows. Binds to the C-terminal propeptide of type I procollagen and enhances procollagen C-proteinase activity. The sequence is that of Procollagen C-endopeptidase enhancer 1 (Pcolce) from Rattus norvegicus (Rat).